Here is a 262-residue protein sequence, read N- to C-terminus: Carbonic anhydrase 1 (262 aa).

Ala-2 carries the post-translational modification N-acetylalanine. The Alpha-carbonic anhydrase domain maps to 4-261 (LNWSYEGENG…LKGRQVKASF (258 aa)). Residue His-65 is the Proton donor/acceptor of the active site. The Zn(2+) site is built by His-95, His-97, and His-120. Residues Thr-200 and 200-201 (TH) each bind substrate.

The protein belongs to the alpha-carbonic anhydrase family. Zn(2+) is required as a cofactor.

It localises to the cytoplasm. It carries out the reaction hydrogencarbonate + H(+) = CO2 + H2O. It catalyses the reaction urea = cyanamide + H2O. Its activity is regulated as follows. Inhibited by acetazolamide. Functionally, catalyzes the reversible hydration of carbon dioxide. Can hydrate cyanamide to urea. This is Carbonic anhydrase 1 (CA1) from Monodelphis domestica (Gray short-tailed opossum).